Here is a 354-residue protein sequence, read N- to C-terminus: Chorismate synthase (354 aa).

Arginine 48 is a binding site for NADP(+). FMN-binding positions include arginine 125–serine 127, glycine 277, lysine 292–serine 296, and arginine 318.

This sequence belongs to the chorismate synthase family. In terms of assembly, homotetramer. FMNH2 serves as cofactor.

The catalysed reaction is 5-O-(1-carboxyvinyl)-3-phosphoshikimate = chorismate + phosphate. The protein operates within metabolic intermediate biosynthesis; chorismate biosynthesis; chorismate from D-erythrose 4-phosphate and phosphoenolpyruvate: step 7/7. Catalyzes the anti-1,4-elimination of the C-3 phosphate and the C-6 proR hydrogen from 5-enolpyruvylshikimate-3-phosphate (EPSP) to yield chorismate, which is the branch point compound that serves as the starting substrate for the three terminal pathways of aromatic amino acid biosynthesis. This reaction introduces a second double bond into the aromatic ring system. The chain is Chorismate synthase from Nitratidesulfovibrio vulgaris (strain ATCC 29579 / DSM 644 / CCUG 34227 / NCIMB 8303 / VKM B-1760 / Hildenborough) (Desulfovibrio vulgaris).